The primary structure comprises 381 residues: Carboxylesterase 5A (381 aa).

Residue serine 108 is the Acyl-ester intermediate of the active site. A disulfide bridge links cysteine 162 with cysteine 173. N-linked (GlcNAc...) asparagine glycosylation is present at asparagine 163. Glutamate 227 acts as the Charge relay system in catalysis. An N-linked (GlcNAc...) asparagine glycan is attached at asparagine 245. The active-site Charge relay system is the histidine 336.

It belongs to the type-B carboxylesterase/lipase family. In terms of assembly, component of a epididymal complex at least composed of soluble form of prion protein PRNP, CLU, BPI, CES5A, MANBA and GLB1. Post-translationally, N-glycosylated. As to expression, detected in corpus and cauda epididymal fluid. Present in seminal fluid but not found to be associated with sperm (at protein level). Not expressed in other tissues.

It is found in the secreted. The enzyme catalyses a carboxylic ester + H2O = an alcohol + a carboxylate + H(+). Involved in the detoxification of xenobiotics and in the activation of ester and amide prodrugs. The sequence is that of Carboxylesterase 5A (CES5A) from Ovis aries (Sheep).